Reading from the N-terminus, the 458-residue chain is MNTSYSQSNLRHNQILIWLCILSFFSVLNEMVLNVSLPDIANDFNKPPASTNWVNTAFMLTFSIGTAVYGKLSDQLGIKRLLLFGIIINCFGSVIGFVGHSFFSLLIMARFIQGAGAAAFPALVMVVVARYIPKENRGKAFGLIGSIVAMGEGVGPAIGGMIAHYIHWSYLLLIPMITIITVPFLMKLLKKEVRIKGHFDIKGIILMSVGIVFFMLFTTSYSISFLIVSVLSFLIFVKHIRKVTDPFVDPGLGKNIPFMIGVLCGGIIFGTVAGFVSMVPYMMKDVHQLSTAEIGSVIIFPGTMSVIIFGYIGGILVDRRGPLYVLNIGVTFLSVSFLTASFLLETTSWFMTIIIVFVLGGLSFTKTVISTIVSSSLKQQEAGAGMSLLNFTSFLSEGTGIAIVGGLLSIPLLDQRLLPMEVDQSTYLYSNLLLLFSGIIVISWLVTLNVYKHSQRDF.

Transmembrane regions (helical) follow at residues 12–33, 81–100, 111–129, 140–162, 165–185, 201–221, 223–240, 256–276, 297–317, 324–344, 346–365, and 432–451; these read HNQI…EMVL, LLLF…FVGH, FIQG…VVVA, AFGL…GGMI, YIHW…VPFL, IKGI…TTSY, ISFL…VKHI, IPFM…AGFV, VIIF…GILV, YVLN…SFLL, TTSW…LSFT, and LLLL…LNVY.

It belongs to the major facilitator superfamily. TCR/Tet family.

The protein localises to the cell membrane. Its function is as follows. Resistance to tetracycline by an active tetracycline efflux. This is an energy-dependent process that decreases the accumulation of the antibiotic in whole cells. This protein functions as a metal-tetracycline/H(+) antiporter. The sequence is that of Tetracycline resistance protein (tet) from Bacillus cereus.